We begin with the raw amino-acid sequence, 137 residues long: Nucleoside diphosphate kinase (137 aa).

ATP is bound by residues Lys-10, Phe-58, Arg-86, Thr-92, Arg-103, and Asn-113. His-116 functions as the Pros-phosphohistidine intermediate in the catalytic mechanism.

Belongs to the NDK family. Homotetramer. Requires Mg(2+) as cofactor.

The protein resides in the cytoplasm. The enzyme catalyses a 2'-deoxyribonucleoside 5'-diphosphate + ATP = a 2'-deoxyribonucleoside 5'-triphosphate + ADP. It carries out the reaction a ribonucleoside 5'-diphosphate + ATP = a ribonucleoside 5'-triphosphate + ADP. Its function is as follows. Major role in the synthesis of nucleoside triphosphates other than ATP. The ATP gamma phosphate is transferred to the NDP beta phosphate via a ping-pong mechanism, using a phosphorylated active-site intermediate. The protein is Nucleoside diphosphate kinase of Helicobacter pylori (strain Shi470).